Here is a 106-residue protein sequence, read N- to C-terminus: Small ribosomal subunit protein uS10 (106 aa).

This sequence belongs to the universal ribosomal protein uS10 family. In terms of assembly, part of the 30S ribosomal subunit.

Its function is as follows. Involved in the binding of tRNA to the ribosomes. The sequence is that of Small ribosomal subunit protein uS10 from Caldicellulosiruptor saccharolyticus (strain ATCC 43494 / DSM 8903 / Tp8T 6331).